The following is a 654-amino-acid chain: tRNA 5-methylaminomethyl-2-thiouridine biosynthesis bifunctional protein MnmC (654 aa).

The tRNA (mnm(5)s(2)U34)-methyltransferase stretch occupies residues 1–235; that stretch reads MSDFQHAQLD…KREMLGGTYQ (235 aa). Positions 261 to 654 are FAD-dependent cmnm(5)s(2)U34 oxidoreductase; it reads VGGGLAGCAS…LRDLVRGQRG (394 aa).

In the N-terminal section; belongs to the methyltransferase superfamily. tRNA (mnm(5)s(2)U34)-methyltransferase family. It in the C-terminal section; belongs to the DAO family. FAD is required as a cofactor.

It localises to the cytoplasm. It catalyses the reaction 5-aminomethyl-2-thiouridine(34) in tRNA + S-adenosyl-L-methionine = 5-methylaminomethyl-2-thiouridine(34) in tRNA + S-adenosyl-L-homocysteine + H(+). Its function is as follows. Catalyzes the last two steps in the biosynthesis of 5-methylaminomethyl-2-thiouridine (mnm(5)s(2)U) at the wobble position (U34) in tRNA. Catalyzes the FAD-dependent demodification of cmnm(5)s(2)U34 to nm(5)s(2)U34, followed by the transfer of a methyl group from S-adenosyl-L-methionine to nm(5)s(2)U34, to form mnm(5)s(2)U34. In Pseudomonas paraeruginosa (strain DSM 24068 / PA7) (Pseudomonas aeruginosa (strain PA7)), this protein is tRNA 5-methylaminomethyl-2-thiouridine biosynthesis bifunctional protein MnmC.